Here is a 156-residue protein sequence, read N- to C-terminus: Small ribosomal subunit protein uS7 (156 aa).

Belongs to the universal ribosomal protein uS7 family. In terms of assembly, part of the 30S ribosomal subunit. Contacts proteins S9 and S11.

Its function is as follows. One of the primary rRNA binding proteins, it binds directly to 16S rRNA where it nucleates assembly of the head domain of the 30S subunit. Is located at the subunit interface close to the decoding center, probably blocks exit of the E-site tRNA. The chain is Small ribosomal subunit protein uS7 from Streptococcus equi subsp. equi (strain 4047).